The chain runs to 117 residues: Large ribosomal subunit protein bL17 (117 aa).

Belongs to the bacterial ribosomal protein bL17 family. As to quaternary structure, part of the 50S ribosomal subunit. Contacts protein L32.

The polypeptide is Large ribosomal subunit protein bL17 (Campylobacter jejuni subsp. jejuni serotype O:6 (strain 81116 / NCTC 11828)).